We begin with the raw amino-acid sequence, 90 residues long: UPF0335 protein R02793 (90 aa).

It belongs to the UPF0335 family.

The chain is UPF0335 protein R02793 from Rhizobium meliloti (strain 1021) (Ensifer meliloti).